The sequence spans 621 residues: Zinc metalloproteinase-disintegrin-like TSV-DM (621 aa).

The N-terminal stretch at 1-20 (MIQVLLVTICLAVFPYQGSS) is a signal peptide. Positions 21–191 (IILESGNVND…EASQSNLTPE (171 aa)) are excised as a propeptide. Gln192 is subject to Pyrrolidone carboxylic acid. The region spanning 200–396 (KYVKFFLVAD…NMPQCILKKP (197 aa)) is the Peptidase M12B domain. Asn219 is a glycosylation site (N-linked (GlcNAc...) asparagine). 3 disulfides stabilise this stretch: Cys311–Cys391, Cys351–Cys375, and Cys353–Cys358. His336 lines the Zn(2+) pocket. Glu337 is an active-site residue. Zn(2+)-binding residues include His340 and His346. Positions 404-489 (PPVCGNYFVE…AECTDRFQRN (86 aa)) constitute a Disintegrin domain. 6 residues coordinate Ca(2+): Val406, Asn409, Phe411, Glu413, Glu416, and Asp419. 14 disulfides stabilise this stretch: Cys407-Cys436, Cys418-Cys431, Cys420-Cys426, Cys430-Cys453, Cys444-Cys450, Cys449-Cys475, Cys462-Cys482, Cys469-Cys500, Cys493-Cys505, Cys512-Cys562, Cys527-Cys573, Cys540-Cys550, Cys557-Cys599, and Cys593-Cys605. Residues 468–470 (ECD) carry the D/ECD-tripeptide motif. Asp470, Met471, Asp473, Asp484, and Arg485 together coordinate Ca(2+). A glycan (N-linked (GlcNAc...) asparagine) is linked at Asn502.

The protein belongs to the venom metalloproteinase (M12B) family. P-III subfamily. P-IIIc sub-subfamily. As to quaternary structure, homodimer; disulfide-linked. It depends on Zn(2+) as a cofactor. The N-terminus is blocked. As to expression, expressed by the venom gland.

Its subcellular location is the secreted. With respect to regulation, inhibited by EDTA and DTT, and partially inhibited by EGTA, but not inhibited by PMSF and NEM. Snake venom zinc metalloprotease that hydrolyzes the alpha-chain (FGA) and more slowly the beta-chain (FGB) of fibrinogen. Inhibits cell proliferation and induces cell morphologic changes transiently on human umbilical vein endothelial cells. This is Zinc metalloproteinase-disintegrin-like TSV-DM from Trimeresurus stejnegeri (Chinese green tree viper).